The sequence spans 176 residues: Conjugal transfer protein TraF (176 aa).

Positions 1–23 (MRHRRALLFLTGAAVFVSALTAA) are cleaved as a signal peptide.

This sequence belongs to the peptidase S26C family.

The protein localises to the periplasm. Involved in conjugal transfer of the plasmid. This Agrobacterium tumefaciens (strain 15955) protein is Conjugal transfer protein TraF (traF).